The following is a 479-amino-acid chain: Ribosomal RNA small subunit methyltransferase F (479 aa).

Residues 125-131 (AAAPGSK), Glu-149, Asp-176, and Asp-194 each bind S-adenosyl-L-methionine. The active-site Nucleophile is the Cys-247.

This sequence belongs to the class I-like SAM-binding methyltransferase superfamily. RsmB/NOP family.

Its subcellular location is the cytoplasm. The catalysed reaction is cytidine(1407) in 16S rRNA + S-adenosyl-L-methionine = 5-methylcytidine(1407) in 16S rRNA + S-adenosyl-L-homocysteine + H(+). Its function is as follows. Specifically methylates the cytosine at position 1407 (m5C1407) of 16S rRNA. This is Ribosomal RNA small subunit methyltransferase F (rsmF) from Escherichia coli (strain K12).